Here is a 393-residue protein sequence, read N- to C-terminus: NAD(P)H-quinone oxidoreductase subunit H, chloroplastic (393 aa).

Belongs to the complex I 49 kDa subunit family. As to quaternary structure, NDH is composed of at least 16 different subunits, 5 of which are encoded in the nucleus.

It is found in the plastid. The protein resides in the chloroplast thylakoid membrane. It catalyses the reaction a plastoquinone + NADH + (n+1) H(+)(in) = a plastoquinol + NAD(+) + n H(+)(out). The catalysed reaction is a plastoquinone + NADPH + (n+1) H(+)(in) = a plastoquinol + NADP(+) + n H(+)(out). Its function is as follows. NDH shuttles electrons from NAD(P)H:plastoquinone, via FMN and iron-sulfur (Fe-S) centers, to quinones in the photosynthetic chain and possibly in a chloroplast respiratory chain. The immediate electron acceptor for the enzyme in this species is believed to be plastoquinone. Couples the redox reaction to proton translocation, and thus conserves the redox energy in a proton gradient. The chain is NAD(P)H-quinone oxidoreductase subunit H, chloroplastic from Guizotia abyssinica (Niger).